A 200-amino-acid chain; its full sequence is Recombination protein RecR (200 aa).

The C4-type zinc-finger motif lies at 60–75 (CVYCQALTEDDVCNIC). The Toprim domain maps to 83–177 (TKLCIIESML…KISRIGFGVP (95 aa)).

It belongs to the RecR family.

May play a role in DNA repair. It seems to be involved in an RecBC-independent recombinational process of DNA repair. It may act with RecF and RecO. This chain is Recombination protein RecR, found in Francisella tularensis subsp. tularensis (strain WY96-3418).